The chain runs to 215 residues: Cytochrome b6 (215 aa).

A helical transmembrane segment spans residues 32–52; it reads IFYCFGGITLTCFLIQVATGF. Cys-35 lines the heme c pocket. The heme b site is built by His-86 and His-100. Transmembrane regions (helical) follow at residues 90–110, 116–136, and 186–206; these read ASMM…TGGF, LTWV…VTGY, and LHTF…FLMI. Residues His-187 and His-202 each coordinate heme b.

It belongs to the cytochrome b family. PetB subfamily. As to quaternary structure, the 4 large subunits of the cytochrome b6-f complex are cytochrome b6, subunit IV (17 kDa polypeptide, PetD), cytochrome f and the Rieske protein, while the 4 small subunits are PetG, PetL, PetM and PetN. The complex functions as a dimer. The cofactor is heme b. Heme c is required as a cofactor.

The protein localises to the plastid. Its subcellular location is the chloroplast thylakoid membrane. Functionally, component of the cytochrome b6-f complex, which mediates electron transfer between photosystem II (PSII) and photosystem I (PSI), cyclic electron flow around PSI, and state transitions. The polypeptide is Cytochrome b6 (Nephroselmis olivacea (Green alga)).